We begin with the raw amino-acid sequence, 110 residues long: Large ribosomal subunit protein uL22 (110 aa).

It belongs to the universal ribosomal protein uL22 family. In terms of assembly, part of the 50S ribosomal subunit.

Functionally, this protein binds specifically to 23S rRNA; its binding is stimulated by other ribosomal proteins, e.g. L4, L17, and L20. It is important during the early stages of 50S assembly. It makes multiple contacts with different domains of the 23S rRNA in the assembled 50S subunit and ribosome. Its function is as follows. The globular domain of the protein is located near the polypeptide exit tunnel on the outside of the subunit, while an extended beta-hairpin is found that lines the wall of the exit tunnel in the center of the 70S ribosome. In Desulfotalea psychrophila (strain LSv54 / DSM 12343), this protein is Large ribosomal subunit protein uL22.